The sequence spans 873 residues: Bifunctional heparan sulfate N-deacetylase/N-sulfotransferase 3 (873 aa).

At 1-13 (MSFIMKLHRHFQR) the chain is on the cytoplasmic side. A helical; Signal-anchor for type II membrane protein membrane pass occupies residues 14-34 (TVILLATFCMVSIIISAYYLY). At 35–873 (SGYKQENELS…WLRQELQKVR (839 aa)) the chain is on the lumenal side. The tract at residues 36–589 (GYKQENELSE…KRHRDIWSKE (554 aa)) is heparan sulfate N-deacetylase 3. N-linked (GlcNAc...) asparagine glycans are attached at residues Asn-146, Asn-226, Asn-342, and Asn-392. The tract at residues 590-873 (KTCDRLPKFL…WLRQELQKVR (284 aa)) is heparan sulfate N-sulfotransferase 3. Lys-605 acts as the For sulfotransferase activity in catalysis. 3'-phosphoadenylyl sulfate is bound at residue 605–609 (KTGTT). Asn-658 carries an N-linked (GlcNAc...) asparagine glycan. Ser-703 contributes to the 3'-phosphoadenylyl sulfate binding site. An N-linked (GlcNAc...) asparagine glycan is attached at Asn-794. The cysteines at positions 809 and 819 are disulfide-linked. 824–828 (KGRKY) serves as a coordination point for 3'-phosphoadenylyl sulfate.

It belongs to the sulfotransferase 1 family. NDST subfamily. In terms of assembly, monomer. Expressed in brain, kidney, liver, fetal and adult lung, adult pancreas, placenta, fetal spleen and fetal thymus. Not detected in adult/ fetal heart and skeletal muscle.

The protein localises to the golgi apparatus membrane. It catalyses the reaction alpha-D-glucosaminyl-[heparan sulfate](n) + 3'-phosphoadenylyl sulfate = N-sulfo-alpha-D-glucosaminyl-[heparan sulfate](n) + adenosine 3',5'-bisphosphate + 2 H(+). Its pathway is glycan metabolism; heparan sulfate biosynthesis. The protein operates within glycan metabolism; heparin biosynthesis. Essential bifunctional enzyme that catalyzes both the N-deacetylation and the N-sulfation of glucosamine (GlcNAc) of the glycosaminoglycan in heparan sulfate. Modifies the GlcNAc-GlcA disaccharide repeating sugar backbone to make N-sulfated heparosan, a prerequisite substrate for later modifications in heparin biosynthesis. Has high deacetylase activity but low sulfotransferase activity. The sequence is that of Bifunctional heparan sulfate N-deacetylase/N-sulfotransferase 3 from Homo sapiens (Human).